The primary structure comprises 1381 residues: DNA-directed RNA polymerase subunit beta'' (1381 aa).

4 residues coordinate Zn(2+): C220, C293, C300, and C303.

It belongs to the RNA polymerase beta' chain family. RpoC2 subfamily. In plastids the minimal PEP RNA polymerase catalytic core is composed of four subunits: alpha, beta, beta', and beta''. When a (nuclear-encoded) sigma factor is associated with the core the holoenzyme is formed, which can initiate transcription. Zn(2+) serves as cofactor.

It localises to the plastid. It is found in the chloroplast. The catalysed reaction is RNA(n) + a ribonucleoside 5'-triphosphate = RNA(n+1) + diphosphate. In terms of biological role, DNA-dependent RNA polymerase catalyzes the transcription of DNA into RNA using the four ribonucleoside triphosphates as substrates. This Draba nemorosa (Woodland whitlowgrass) protein is DNA-directed RNA polymerase subunit beta''.